The following is a 181-amino-acid chain: Probable cobalt-precorrin-6B C(15)-methyltransferase (decarboxylating) (181 aa).

Residues T16, 40–44, D61, and A89 contribute to the S-adenosyl-L-methionine site; that span reads GCGSG.

This sequence belongs to the methyltransferase superfamily. Archaeal-type CbiT family.

The catalysed reaction is Co-precorrin-6B + S-adenosyl-L-methionine = Co-precorrin-7 + S-adenosyl-L-homocysteine + CO2. Its pathway is cofactor biosynthesis; adenosylcobalamin biosynthesis; cob(II)yrinate a,c-diamide from sirohydrochlorin (anaerobic route): step 8/10. Its function is as follows. Catalyzes the methylation of C-15 in cobalt-precorrin-6B followed by the decarboxylation of C-12 to form cobalt-precorrin-7. In Methanococcus maripaludis (strain C7 / ATCC BAA-1331), this protein is Probable cobalt-precorrin-6B C(15)-methyltransferase (decarboxylating).